The primary structure comprises 286 residues: Phosphatidylserine decarboxylase proenzyme (286 aa).

Residues Asp90, His147, and Ser250 each act as charge relay system; for autoendoproteolytic cleavage activity in the active site. Catalysis depends on Ser250, which acts as the Schiff-base intermediate with substrate; via pyruvic acid; for decarboxylase activity. Ser250 is subject to Pyruvic acid (Ser); by autocatalysis.

This sequence belongs to the phosphatidylserine decarboxylase family. PSD-B subfamily. Prokaryotic type I sub-subfamily. Heterodimer of a large membrane-associated beta subunit and a small pyruvoyl-containing alpha subunit. It depends on pyruvate as a cofactor. Is synthesized initially as an inactive proenzyme. Formation of the active enzyme involves a self-maturation process in which the active site pyruvoyl group is generated from an internal serine residue via an autocatalytic post-translational modification. Two non-identical subunits are generated from the proenzyme in this reaction, and the pyruvate is formed at the N-terminus of the alpha chain, which is derived from the carboxyl end of the proenzyme. The autoendoproteolytic cleavage occurs by a canonical serine protease mechanism, in which the side chain hydroxyl group of the serine supplies its oxygen atom to form the C-terminus of the beta chain, while the remainder of the serine residue undergoes an oxidative deamination to produce ammonia and the pyruvoyl prosthetic group on the alpha chain. During this reaction, the Ser that is part of the protease active site of the proenzyme becomes the pyruvoyl prosthetic group, which constitutes an essential element of the active site of the mature decarboxylase.

It localises to the cell membrane. It catalyses the reaction a 1,2-diacyl-sn-glycero-3-phospho-L-serine + H(+) = a 1,2-diacyl-sn-glycero-3-phosphoethanolamine + CO2. It functions in the pathway phospholipid metabolism; phosphatidylethanolamine biosynthesis; phosphatidylethanolamine from CDP-diacylglycerol: step 2/2. Its function is as follows. Catalyzes the formation of phosphatidylethanolamine (PtdEtn) from phosphatidylserine (PtdSer). This chain is Phosphatidylserine decarboxylase proenzyme, found in Saccharophagus degradans (strain 2-40 / ATCC 43961 / DSM 17024).